The primary structure comprises 376 residues: N-acetyldiaminopimelate deacetylase (376 aa).

Residue aspartate 69 is part of the active site. Glutamate 128 acts as the Proton acceptor in catalysis.

The protein belongs to the peptidase M20A family. N-acetyldiaminopimelate deacetylase subfamily.

The enzyme catalyses N-acetyl-(2S,6S)-2,6-diaminopimelate + H2O = (2S,6S)-2,6-diaminopimelate + acetate. Its pathway is amino-acid biosynthesis; L-lysine biosynthesis via DAP pathway; LL-2,6-diaminopimelate from (S)-tetrahydrodipicolinate (acetylase route): step 3/3. Functionally, catalyzes the conversion of N-acetyl-diaminopimelate to diaminopimelate and acetate. The sequence is that of N-acetyldiaminopimelate deacetylase from Bacillus cereus (strain AH820).